The chain runs to 316 residues: 4-hydroxy-3-methylbut-2-enyl diphosphate reductase (316 aa).

Cysteine 18 contacts [4Fe-4S] cluster. (2E)-4-hydroxy-3-methylbut-2-enyl diphosphate contacts are provided by histidine 47 and histidine 80. The dimethylallyl diphosphate site is built by histidine 47 and histidine 80. Histidine 47 and histidine 80 together coordinate isopentenyl diphosphate. [4Fe-4S] cluster is bound at residue cysteine 102. Histidine 130 provides a ligand contact to (2E)-4-hydroxy-3-methylbut-2-enyl diphosphate. Histidine 130 contacts dimethylallyl diphosphate. Histidine 130 is an isopentenyl diphosphate binding site. Residue glutamate 132 is the Proton donor of the active site. Residue threonine 171 participates in (2E)-4-hydroxy-3-methylbut-2-enyl diphosphate binding. Residue cysteine 201 coordinates [4Fe-4S] cluster. Residues serine 229, serine 230, asparagine 231, and serine 274 each contribute to the (2E)-4-hydroxy-3-methylbut-2-enyl diphosphate site. 4 residues coordinate dimethylallyl diphosphate: serine 229, serine 230, asparagine 231, and serine 274. Isopentenyl diphosphate contacts are provided by serine 229, serine 230, asparagine 231, and serine 274.

This sequence belongs to the IspH family. The cofactor is [4Fe-4S] cluster.

The enzyme catalyses isopentenyl diphosphate + 2 oxidized [2Fe-2S]-[ferredoxin] + H2O = (2E)-4-hydroxy-3-methylbut-2-enyl diphosphate + 2 reduced [2Fe-2S]-[ferredoxin] + 2 H(+). The catalysed reaction is dimethylallyl diphosphate + 2 oxidized [2Fe-2S]-[ferredoxin] + H2O = (2E)-4-hydroxy-3-methylbut-2-enyl diphosphate + 2 reduced [2Fe-2S]-[ferredoxin] + 2 H(+). The protein operates within isoprenoid biosynthesis; dimethylallyl diphosphate biosynthesis; dimethylallyl diphosphate from (2E)-4-hydroxy-3-methylbutenyl diphosphate: step 1/1. It functions in the pathway isoprenoid biosynthesis; isopentenyl diphosphate biosynthesis via DXP pathway; isopentenyl diphosphate from 1-deoxy-D-xylulose 5-phosphate: step 6/6. Its function is as follows. Catalyzes the conversion of 1-hydroxy-2-methyl-2-(E)-butenyl 4-diphosphate (HMBPP) into a mixture of isopentenyl diphosphate (IPP) and dimethylallyl diphosphate (DMAPP). Acts in the terminal step of the DOXP/MEP pathway for isoprenoid precursor biosynthesis. The sequence is that of 4-hydroxy-3-methylbut-2-enyl diphosphate reductase from Ruegeria sp. (strain TM1040) (Silicibacter sp.).